Consider the following 446-residue polypeptide: D(1A) dopamine receptor (446 aa).

The Extracellular segment spans residues 1-23 (MRTLNTSTMEGTGLVAERDFSFR). Asn5 carries an N-linked (GlcNAc...) asparagine glycan. The chain crosses the membrane as a helical span at residues 24–49 (ILTACFLSLLILSTLLGNTLVCAAVI). The Cytoplasmic segment spans residues 50–60 (RFRHLRSKVTN). The chain crosses the membrane as a helical span at residues 61-87 (FFVISLAVSDLLVAVLVMPWKAVAEIA). Topologically, residues 88-96 (GFWPFGSFC) are extracellular. A disulfide bridge connects residues Cys96 and Cys186. Residues 97-119 (NIWVAFDIMCSTASILNLCVISV) form a helical membrane-spanning segment. At 120–138 (DRYWAISSPFRYERKMTPK) the chain is on the cytoplasmic side. Residues 139–163 (AAFILISVAWTLSVLISFIPVQLSW) form a helical membrane-spanning segment. At 164–192 (HKAKPTGPSEGNATSLGKTINNCDSSLSR) the chain is on the extracellular side. Residue Asn175 is glycosylated (N-linked (GlcNAc...) asparagine). Residues 193 to 218 (TYAISSSLISFYIPVAIMIVTYTRIY) form a helical membrane-spanning segment. At 219–272 (RIAQKQIRRISALERAAVHAKNCQTTTGNGNPMECSQPESSFKMSFKRETKVLK) the chain is on the cytoplasmic side. A helical membrane pass occupies residues 273-299 (TLSVIMGVFVCCWLPFFILNCMVPFCG). Residues 300–312 (SGETKPFCIDSIT) are Extracellular-facing. Residues 313–337 (FDVFVWFGWANSSLNPIIYAFNADF) form a helical membrane-spanning segment. Topologically, residues 338–446 (RKAFSTLLGC…PITQNGQHPT (109 aa)) are cytoplasmic. Residues Cys347 and Cys351 are each lipidated (S-palmitoyl cysteine).

It belongs to the G-protein coupled receptor 1 family. Interacts with DNAJC14 via its C-terminus. Interacts with DRD2. Interacts with DORIP1.

It localises to the cell membrane. It is found in the endoplasmic reticulum membrane. Its subcellular location is the cell projection. The protein localises to the cilium membrane. The protein resides in the dendrite. It localises to the dendritic spine. Its function is as follows. Dopamine receptor whose activity is mediated by G proteins which activate adenylyl cyclase. The chain is D(1A) dopamine receptor (DRD1) from Bos taurus (Bovine).